We begin with the raw amino-acid sequence, 200 residues long: MDESLAELGEHILGTLEESVLGFHVAFGELNVLAQAQSIARVLKFLRDDPACRFGTLLDITAVDYPQRPERFDVVYHLLSMHQNQRIRVTVRTNEETAVPSVVAVYPSANWYERETFDMYGVLFSDHPDLRRILTDYGFNGYPLRKDFPLTGYVEVRYDDDEKRVVYEPVKLVQEFRNFDFMSPWEGAEYLLPGDEKAEH.

It belongs to the complex I 30 kDa subunit family. As to quaternary structure, NDH-1 is composed of 14 different subunits. Subunits NuoB, C, D, E, F, and G constitute the peripheral sector of the complex.

The protein resides in the cell inner membrane. It carries out the reaction a quinone + NADH + 5 H(+)(in) = a quinol + NAD(+) + 4 H(+)(out). NDH-1 shuttles electrons from NADH, via FMN and iron-sulfur (Fe-S) centers, to quinones in the respiratory chain. The immediate electron acceptor for the enzyme in this species is believed to be ubiquinone. Couples the redox reaction to proton translocation (for every two electrons transferred, four hydrogen ions are translocated across the cytoplasmic membrane), and thus conserves the redox energy in a proton gradient. This is NADH-quinone oxidoreductase subunit C from Parvibaculum lavamentivorans (strain DS-1 / DSM 13023 / NCIMB 13966).